Consider the following 344-residue polypeptide: Arginase 2, chloroplastic/mitochondrial (344 aa).

The N-terminal 26 residues, 1–26 (MWKIGQRGVPYFQRLIAAPFTTLRSL), are a transit peptide targeting the chloroplast and mitochondrion. Mn(2+)-binding residues include His-163, Asp-187, His-189, and Asp-191. Residues 189 to 193 (HPDIY), 197 to 199 (EGN), and Asn-228 contribute to the substrate site. Mn(2+)-binding residues include Asp-272 and Asp-274. Glu-315 provides a ligand contact to substrate.

This sequence belongs to the arginase family. Mn(2+) is required as a cofactor. As to expression, expressed in vasculature of roots, root tips, leaves and cotyledons.

It localises to the mitochondrion. The protein localises to the plastid. It is found in the chloroplast. It catalyses the reaction L-arginine + H2O = urea + L-ornithine. The enzyme catalyses agmatine + H2O = urea + putrescine. It participates in nitrogen metabolism; urea cycle; L-ornithine and urea from L-arginine: step 1/1. Its pathway is amine and polyamine biosynthesis; putrescine biosynthesis via agmatine pathway; putrescine from agmatine: step 1/1. Catalyzes the hydrolysis of L-arginine to urea and L-ornithine. The latter can be utilized in the urea cycle or as a precursor for the synthesis of both polyamines and proline. Possesses agmatinase activity. Catalyzes the formation of putrescine from agmatine. The chain is Arginase 2, chloroplastic/mitochondrial (ARGAH2) from Arabidopsis thaliana (Mouse-ear cress).